We begin with the raw amino-acid sequence, 1448 residues long: DNA primase TraC (1448 aa).

3 stretches are compositionally biased toward basic and acidic residues: residues 844–856 (ARVQ…RDPN), 863–872 (SAAKEARKTA), and 882–898 (DAQR…RDRQ). Disordered regions lie at residues 844-915 (ARVQ…INVP) and 952-982 (QGAA…QQAQ). Residues 964-982 (AQPAPEAQGEAQKPAQQAQ) are compositionally biased toward low complexity. The 89-residue stretch at 1237–1325 (PALVISEGYA…GKAIFPIFAP (89 aa)) folds into the Toprim domain. Residues 1414-1448 (ISQVQRDEQQHQEQKHVEKKQQQIEQRPRRAARIG) are disordered. A compositionally biased stretch (basic and acidic residues) spans 1418 to 1441 (QRDEQQHQEQKHVEKKQQQIEQRP).

In terms of biological role, required for autonomous replication in E.coli. Transferred into the recipient cell during bacterial conjugation. Catalyzes the synthesis of short oligoribonucleotide primers with CpA or pCpA at their 5'-termini on a single-stranded template DNA. In Escherichia coli, this protein is DNA primase TraC (traC).